The sequence spans 426 residues: Flotillin-1 (426 aa).

It belongs to the band 7/mec-2 family. Flotillin subfamily. In terms of assembly, heterooligomeric complex of flotillins 1 and 2 and caveolins 1 and 2. As to expression, expressed in brain and ventral nerve cord from stage 12-16 of embryogenesis.

Its subcellular location is the cell membrane. It is found in the membrane. The protein localises to the caveola. In terms of biological role, may act as a scaffolding protein within caveolar membranes, functionally participating in formation of caveolae or caveolae-like vesicles. In Drosophila melanogaster (Fruit fly), this protein is Flotillin-1.